The following is a 355-amino-acid chain: F-box only protein 32 (355 aa).

A Nuclear localization signal motif is present at residues 62–67 (KKRKKD). Positions 169–173 (LLQTL) match the Nuclear export signal motif. Residues 223-271 (LTFTDLPLCLQLNIMQRLSDGRDLVSLGQVAPDLHVLSEDRLLWKKLCQ) form the F-box domain. The short motif at 280–295 (RKRLILSDKGQLDWKK) is the Bipartite nuclear localization signal element.

Part of the SCF (SKP1-CUL1-F-box) E3 ubiquitin-protein ligase complex SCF(FBXO32) formed of CUL1, SKP1, RBX1 and FBXO32.

Its subcellular location is the cytoplasm. It localises to the nucleus. Its pathway is protein modification; protein ubiquitination. In terms of biological role, substrate recognition component of a SCF (SKP1-CUL1-F-box protein) E3 ubiquitin-protein ligase complex which mediates the ubiquitination and subsequent proteasomal degradation of target proteins. Probably recognizes and binds to phosphorylated target proteins during skeletal muscle atrophy. Recognizes TERF1. The polypeptide is F-box only protein 32 (FBXO32) (Sus scrofa (Pig)).